The primary structure comprises 142 residues: Hemoglobin subunit alpha-A (142 aa).

Positions 2-142 constitute a Globin domain; that stretch reads VLSAADKTNV…VGAVLTAKYR (141 aa). Histidine 59 serves as a coordination point for O2. Histidine 88 lines the heme b pocket.

The protein belongs to the globin family. As to quaternary structure, heterotetramer of two alpha chains and two beta chains. Red blood cells.

In terms of biological role, involved in oxygen transport from the lung to the various peripheral tissues. The chain is Hemoglobin subunit alpha-A (HBAA) from Anas platyrhynchos platyrhynchos (Northern mallard).